The following is an 84-amino-acid chain: Small ribosomal subunit protein bS16 (84 aa).

It belongs to the bacterial ribosomal protein bS16 family.

The chain is Small ribosomal subunit protein bS16 from Thioalkalivibrio sulfidiphilus (strain HL-EbGR7).